A 133-amino-acid chain; its full sequence is uncharacterized protein (133 aa).

This is an uncharacterized protein from Methanothermobacter marburgensis (strain ATCC BAA-927 / DSM 2133 / JCM 14651 / NBRC 100331 / OCM 82 / Marburg) (Methanobacterium thermoautotrophicum).